Here is a 157-residue protein sequence, read N- to C-terminus: SsrA-binding protein (157 aa).

The interval 131-157 (KQLHDKRESVKQRDWQRDKARLMRDKG) is disordered. Residues 132-157 (QLHDKRESVKQRDWQRDKARLMRDKG) show a composition bias toward basic and acidic residues.

Belongs to the SmpB family.

It is found in the cytoplasm. In terms of biological role, required for rescue of stalled ribosomes mediated by trans-translation. Binds to transfer-messenger RNA (tmRNA), required for stable association of tmRNA with ribosomes. tmRNA and SmpB together mimic tRNA shape, replacing the anticodon stem-loop with SmpB. tmRNA is encoded by the ssrA gene; the 2 termini fold to resemble tRNA(Ala) and it encodes a 'tag peptide', a short internal open reading frame. During trans-translation Ala-aminoacylated tmRNA acts like a tRNA, entering the A-site of stalled ribosomes, displacing the stalled mRNA. The ribosome then switches to translate the ORF on the tmRNA; the nascent peptide is terminated with the 'tag peptide' encoded by the tmRNA and targeted for degradation. The ribosome is freed to recommence translation, which seems to be the essential function of trans-translation. The sequence is that of SsrA-binding protein from Methylorubrum populi (strain ATCC BAA-705 / NCIMB 13946 / BJ001) (Methylobacterium populi).